A 302-amino-acid polypeptide reads, in one-letter code: MNRPLAVIGPTGTGKSALALEFAERVGGEIVNADAMQQYRGMDIGTAKLTVEERRGIPHHQLDVLDVVETATVARYQQAAAADIETIAARGATPVIVGGSMLYIQSLLDEWSFPATDPAVRAKYEARLAEIGVAALHAELARVDAAAAASILPTDGRRIVRALEVVELTGEPFAASAPTIGAPRWDTAIIGLDWDTAVLDERLAQRTDKMFADGLVREVVDLLERGLRDGVTAARALGYAQVLADLDAGGDGSGAREPTFIGTRRYVRRQRSWFRRDHRVVWLDGASEGLVDDALRVWRAVS.

9-16 (GPTGTGKS) lines the ATP pocket. 11-16 (TGTGKS) is a substrate binding site.

The protein belongs to the IPP transferase family. In terms of assembly, monomer. It depends on Mg(2+) as a cofactor.

The catalysed reaction is adenosine(37) in tRNA + dimethylallyl diphosphate = N(6)-dimethylallyladenosine(37) in tRNA + diphosphate. Catalyzes the transfer of a dimethylallyl group onto the adenine at position 37 in tRNAs that read codons beginning with uridine, leading to the formation of N6-(dimethylallyl)adenosine (i(6)A). The sequence is that of tRNA dimethylallyltransferase from Mycolicibacterium smegmatis (strain ATCC 700084 / mc(2)155) (Mycobacterium smegmatis).